A 225-amino-acid polypeptide reads, in one-letter code: Proteoglycan 3 (225 aa).

An N-terminal signal peptide occupies residues 1-17 (MQCLLLLPFLLLGTVSA). The 118-residue stretch at 107–224 (CKICRYLLVR…CDKQLPFVCS (118 aa)) folds into the C-type lectin domain. 2 cysteine pairs are disulfide-bonded: cysteine 128/cysteine 223 and cysteine 200/cysteine 215.

As to expression, expressed in bone marrow. Not detected in placenta.

The protein localises to the cytoplasmic granule. In terms of biological role, possesses similar cytotoxic and cytostimulatory activities to PRG2/MBP. In vitro, stimulates neutrophil superoxide production and IL8 release, and histamine and leukotriene C4 release from basophils. The sequence is that of Proteoglycan 3 from Homo sapiens (Human).